A 231-amino-acid polypeptide reads, in one-letter code: Phosphatidylserine decarboxylase proenzyme (231 aa).

The Schiff-base intermediate with substrate; via pyruvic acid role is filled by S188. S188 carries the post-translational modification Pyruvic acid (Ser); by autocatalysis.

It belongs to the phosphatidylserine decarboxylase family. PSD-A subfamily. As to quaternary structure, heterodimer of a large membrane-associated beta subunit and a small pyruvoyl-containing alpha subunit. The cofactor is pyruvate. In terms of processing, is synthesized initially as an inactive proenzyme. Formation of the active enzyme involves a self-maturation process in which the active site pyruvoyl group is generated from an internal serine residue via an autocatalytic post-translational modification. Two non-identical subunits are generated from the proenzyme in this reaction, and the pyruvate is formed at the N-terminus of the alpha chain, which is derived from the carboxyl end of the proenzyme. The post-translation cleavage follows an unusual pathway, termed non-hydrolytic serinolysis, in which the side chain hydroxyl group of the serine supplies its oxygen atom to form the C-terminus of the beta chain, while the remainder of the serine residue undergoes an oxidative deamination to produce ammonia and the pyruvoyl prosthetic group on the alpha chain.

It is found in the cell membrane. It carries out the reaction a 1,2-diacyl-sn-glycero-3-phospho-L-serine + H(+) = a 1,2-diacyl-sn-glycero-3-phosphoethanolamine + CO2. It functions in the pathway phospholipid metabolism; phosphatidylethanolamine biosynthesis; phosphatidylethanolamine from CDP-diacylglycerol: step 2/2. Its function is as follows. Catalyzes the formation of phosphatidylethanolamine (PtdEtn) from phosphatidylserine (PtdSer). In Rickettsia peacockii (strain Rustic), this protein is Phosphatidylserine decarboxylase proenzyme.